The primary structure comprises 407 residues: Flagellar calcium-binding protein TB-44A (407 aa).

The tract at residues 1 to 27 is disordered; that stretch reads MGCSASKDTTNSKDGAASKGGKDGKTT. Positions 25-399 are 2 X 186 AA almost perfect repeats; sequence KTTADRKVAW…LQVCGDPDGE (375 aa). Residues 48–83 form the EF-hand 1 domain; the sequence is ESKSRRIELFKRFDTNGTGKLSFREVLDGCYSILKL. Ca(2+) is bound by residues Asp-61, Asn-63, Thr-65, Lys-67, and Glu-72. The ancestral calcium site 2 stretch occupies residues 110-121; it reads GVGEEDLVEFLE. EF-hand domains follow at residues 130–165, 167–202, and 237–272; these read YDIF…WKEW, VDIT…KKLQ, and ESKS…ILKL. Residues Asp-143, Asp-145, Ser-147, Glu-154, Asp-180, Asn-182, Ser-184, Glu-191, Asp-250, Asn-252, Thr-254, Lys-256, and Glu-261 each contribute to the Ca(2+) site. Positions 299-310 are ancestral calcium site 6; it reads GVGEEDLVEFLE. EF-hand domains are found at residues 319–354 and 356–391; these read YDIF…WKEW and VDIT…KKLQ. Ca(2+)-binding residues include Asp-332, Asp-334, Ser-336, Glu-343, Asp-369, Asn-371, Ser-373, and Glu-380.

Belongs to the calflagin family.

It is found in the cell projection. The protein resides in the cilium. It localises to the flagellum. May contribute to the rapid motility of the trypanosomes, playing a role either in flagellar structure or in calcium metabolism. Could alternate between a GDP-bound inactive form to a calcium/GTP-bound active form. This Trypanosoma brucei brucei protein is Flagellar calcium-binding protein TB-44A.